Reading from the N-terminus, the 300-residue chain is C-4 methylsterol oxidase erg25 (300 aa).

The 137-residue stretch at 140–276 folds into the Fatty acid hydroxylase domain; it reads TLFFFLEDTW…FRWWDAVLKT (137 aa). The Histidine box-1 signature appears at 154-158; it reads HRLFH. Residues 167-171 carry the Histidine box-2 motif; that stretch reads HKVHH. The helical transmembrane segment at 186-206 threads the bilayer; it reads PLEIILLGAGTVFVPLMWCYF. Positions 251–257 match the Histidine box-3 motif; that stretch reads HHDYHHM.

It belongs to the sterol desaturase family. In terms of assembly, heterotetramer of erg25, erg26, erg27 and erg28. Erg28 acts as a scaffold to tether erg27 and other 4,4-demethylation-related enzymes, forming a demethylation enzyme complex, in the endoplasmic reticulum. Fe cation is required as a cofactor.

Its subcellular location is the endoplasmic reticulum membrane. It catalyses the reaction 4,4-dimethyl-5alpha-cholesta-8,24-dien-3beta-ol + 6 Fe(II)-[cytochrome b5] + 3 O2 + 5 H(+) = 4beta-methylzymosterol-4alpha-carboxylate + 6 Fe(III)-[cytochrome b5] + 4 H2O. The catalysed reaction is 4alpha-methylzymosterol + 6 Fe(II)-[cytochrome b5] + 3 O2 + 5 H(+) = 4alpha-carboxyzymosterol + 6 Fe(III)-[cytochrome b5] + 4 H2O. The protein operates within steroid biosynthesis; zymosterol biosynthesis; zymosterol from lanosterol: step 3/6. It participates in steroid metabolism; ergosterol biosynthesis. Its function is as follows. C-4 methylsterol oxidase; part of the third module of ergosterol biosynthesis pathway that includes by the late steps of the pathway. Erg25 is a catalytic component of the C-4 demethylation complex that catalyzes the three-step monooxygenation required for the demethylation of 4,4-dimethyl and 4alpha-methylsterols. The third module or late pathway involves the ergosterol synthesis itself through consecutive reactions that mainly occur in the endoplasmic reticulum (ER) membrane. Firstly, the squalene synthase erg9 catalyzes the condensation of 2 farnesyl pyrophosphate moieties to form squalene, which is the precursor of all steroids. Secondly, squalene is converted into lanosterol by the consecutive action of the squalene epoxidase erg1 and the lanosterol synthase erg7. The lanosterol 14-alpha-demethylase erg11/cyp1 catalyzes C14-demethylation of lanosterol to produce 4,4'-dimethyl cholesta-8,14,24-triene-3-beta-ol. In the next steps, a complex process involving various demethylation, reduction and desaturation reactions catalyzed by the C-14 reductase erg24 and the C-4 demethylation complex erg25-erg26-erg27 leads to the production of zymosterol. Erg28 likely functions in the C-4 demethylation complex reaction by tethering erg26 and Erg27 to the endoplasmic reticulum or to facilitate interaction between these proteins. Then, the sterol 24-C-methyltransferase erg6 catalyzes the methyl transfer from S-adenosyl-methionine to the C-24 of zymosterol to form fecosterol. The C-8 sterol isomerase erg2 catalyzes the reaction which results in unsaturation at C-7 in the B ring of sterols and thus converts fecosterol to episterol. The sterol-C5-desaturases erg31 and erg32 then catalyze the introduction of a C-5 double bond in the B ring to produce 5-dehydroepisterol. The C-22 sterol desaturase erg5 further converts 5-dehydroepisterol into ergosta-5,7,22,24(28)-tetraen-3beta-ol by forming the C-22(23) double bond in the sterol side chain. Finally, ergosta-5,7,22,24(28)-tetraen-3beta-ol is substrate of the C-24(28) sterol reductase erg4 to produce ergosterol. In the genus Schizosaccharomyces, a second route exists between lanosterol and fecosterol, via the methylation of lanosterol to eburicol by erg6, followed by C14-demethylation by erg11/cyp1 and C4-demethylation by the demethylation complex erg25-erg26-erg27. The polypeptide is C-4 methylsterol oxidase erg25 (Schizosaccharomyces pombe (strain 972 / ATCC 24843) (Fission yeast)).